The sequence spans 414 residues: Stork-head box protein ham-1 (414 aa).

The tract at residues 1-31 is essential for association with cell cortex; it reads MTYLAVVLNGPKAKNGRKVFDSFLEQNRQMF. The 78-residue stretch at 93–170 folds into the Winged helix Storkhead-box1 domain; it reads QQVEQMHFVP…MADHYFVSVP (78 aa). A disordered region spans residues 282 to 362; sequence ECQRKARRRN…SNEEAGSISD (81 aa). Residues 285–295 are bi-partite nuclear localization signal; the sequence is RKARRRNHPRR. Residues 321–327 form a nuclear localization signal region; that stretch reads PTRRRAR. The span at 332–351 shows a compositional bias: polar residues; that stretch reads LRSSTPNNSDSAYSISPPHT.

The protein localises to the cytoplasm. It localises to the cell cortex. It is found in the nucleus. Its function is as follows. Probable transcription factor. Required for asymmetric cell division in neuroblasts, perhaps acting by regulating spindle positioning and myosin polarization, and thus the position of the cleavage plane. Required to produce daughter cell size asymmetry in neuroblasts undergoing asymmetric cell division, usually giving rise to one precursor cell and one apoptotic cell. Positively modulates expression of the serine/threonine kinase pig-1/MELK during asymmetric division of the Q.a neuroblast. Plays a role in neural fate specification in several dopaminergic lineages, including the hermaphrodite-specific neuron (HSN)/phasmid neuron (PHB), acting in concert with the kinase, ham-1, and the T-box protein tbx-2 and the homeobox protein egl-5. The protein is Stork-head box protein ham-1 of Caenorhabditis elegans.